Consider the following 252-residue polypeptide: Tabinhibitin 9 (252 aa).

A signal peptide spans methionine 1–serine 23. The Cell attachment site signature appears at arginine 32–aspartate 34. An SCP domain is found at tyrosine 63–phenylalanine 207.

It belongs to the CRISP family. Expressed in salivary glands.

The protein localises to the secreted. Inhibits platelet aggregation induced by all agonists tested (ADP, arachidonic acid, the thromboxane A2 analog U46619, thrombin, and snake venom snaclecs (TMVA that activates platelet through GPIB, and stejnulxin that specifically acts through GPVI (GP6))). May act by competing with fibrinogen for binding to glycoprotein IIb/IIIa (ITGA2B/ITGB3). The sequence is that of Tabinhibitin 9 from Tabanus yao (Horsefly).